Consider the following 256-residue polypeptide: Pimeloyl-[acyl-carrier protein] methyl ester esterase (256 aa).

Positions 15 to 242 constitute an AB hydrolase-1 domain; the sequence is HLVLLHGWGL…AAHAPFISHP (228 aa). Substrate is bound by residues tryptophan 22, 82 to 83, and 143 to 147; these read SL and FLALQ. The active-site Nucleophile is serine 82. Catalysis depends on residues aspartate 207 and histidine 235. Histidine 235 is a substrate binding site.

This sequence belongs to the AB hydrolase superfamily. Carboxylesterase BioH family. Monomer.

Its subcellular location is the cytoplasm. It carries out the reaction 6-carboxyhexanoyl-[ACP] methyl ester + H2O = 6-carboxyhexanoyl-[ACP] + methanol + H(+). It participates in cofactor biosynthesis; biotin biosynthesis. In terms of biological role, the physiological role of BioH is to remove the methyl group introduced by BioC when the pimeloyl moiety is complete. It allows to synthesize pimeloyl-ACP via the fatty acid synthetic pathway through the hydrolysis of the ester bonds of pimeloyl-ACP esters. This Escherichia coli O157:H7 protein is Pimeloyl-[acyl-carrier protein] methyl ester esterase.